A 243-amino-acid chain; its full sequence is GrpE protein homolog, mitochondrial (243 aa).

A disordered region spans residues 42 to 75; sequence TEASKKEGKEDKAEAQGSQEPETAAETNKEAEGA. Residues 44–55 are compositionally biased toward basic and acidic residues; that stretch reads ASKKEGKEDKAE.

The protein belongs to the GrpE family. As to quaternary structure, component of the PAM complex, at least composed of mtHsp70, MGE1, TIM44, PAM16, PAM17 and PAM18.

The protein localises to the mitochondrion matrix. In terms of biological role, essential component of the PAM complex, a complex required for the translocation of transit peptide-containing proteins from the inner membrane into the mitochondrial matrix in an ATP-dependent manner. Seems to control the nucleotide-dependent binding of SSC1 to substrate proteins. This chain is GrpE protein homolog, mitochondrial (mge1), found in Debaryomyces hansenii (strain ATCC 36239 / CBS 767 / BCRC 21394 / JCM 1990 / NBRC 0083 / IGC 2968) (Yeast).